We begin with the raw amino-acid sequence, 504 residues long: Probable cytochrome P450 513F1 (504 aa).

Residues methionine 1–isoleucine 21 traverse the membrane as a helical segment. Cysteine 449 lines the heme pocket.

This sequence belongs to the cytochrome P450 family. Requires heme as cofactor.

It is found in the membrane. The polypeptide is Probable cytochrome P450 513F1 (cyp513F1) (Dictyostelium discoideum (Social amoeba)).